The sequence spans 372 residues: Heat-inducible transcription repressor HrcA (372 aa).

The tract at residues 300–334 (YGRSGAAGEPAGNDPVGEPETESETESQTNDTEPI) is disordered.

The protein belongs to the HrcA family.

Negative regulator of class I heat shock genes (grpE-dnaK-dnaJ and groELS operons). Prevents heat-shock induction of these operons. The protein is Heat-inducible transcription repressor HrcA of Bifidobacterium longum (strain DJO10A).